Here is a 303-residue protein sequence, read N- to C-terminus: Cytochrome c oxidase subunit 2 (303 aa).

The first 25 residues, 1-25 (MRHSTTLTGCATGAAGLLAATAAAA), serve as a signal peptide directing secretion. The next 2 membrane-spanning stretches (helical) occupy residues 60 to 80 (FILVIIAAITIFVTLLILYAV) and 104 to 124 (WTIVPIVILVAIGAFSLPVLF). Residues H217, C252, C256, and H260 each contribute to the Cu cation site.

It belongs to the cytochrome c oxidase subunit 2 family. The cofactor is Cu cation.

It localises to the cell membrane. It catalyses the reaction 4 Fe(II)-[cytochrome c] + O2 + 8 H(+)(in) = 4 Fe(III)-[cytochrome c] + 2 H2O + 4 H(+)(out). Subunits I and II form the functional core of the enzyme complex. Electrons originating in cytochrome c are transferred via heme a and Cu(A) to the binuclear center formed by heme a3 and Cu(B). This chain is Cytochrome c oxidase subunit 2 (ctaC), found in Cereibacter sphaeroides (Rhodobacter sphaeroides).